A 111-amino-acid chain; its full sequence is Probable 4-amino-4-deoxy-L-arabinose-phosphoundecaprenol flippase subunit ArnE (111 aa).

Over Met1–His35 the chain is Cytoplasmic. A helical transmembrane segment spans residues Ile36–Leu56. Positions Leu40–Ser109 constitute an EamA domain. Residues Val57–Asn60 are Periplasmic-facing. A helical transmembrane segment spans residues Val61–Ala81. The Cytoplasmic segment spans residues Val82 to Glu87. The helical transmembrane segment at Pro88–Gly108 threads the bilayer. At Ser109–Val111 the chain is on the periplasmic side.

Belongs to the ArnE family. In terms of assembly, heterodimer of ArnE and ArnF.

Its subcellular location is the cell inner membrane. The protein operates within bacterial outer membrane biogenesis; lipopolysaccharide biosynthesis. Translocates 4-amino-4-deoxy-L-arabinose-phosphoundecaprenol (alpha-L-Ara4N-phosphoundecaprenol) from the cytoplasmic to the periplasmic side of the inner membrane. The polypeptide is Probable 4-amino-4-deoxy-L-arabinose-phosphoundecaprenol flippase subunit ArnE (Escherichia coli O6:H1 (strain CFT073 / ATCC 700928 / UPEC)).